A 346-amino-acid polypeptide reads, in one-letter code: Lipooligosaccharide heptosyltransferase 2 (346 aa).

The protein belongs to the glycosyltransferase 9 family.

It carries out the reaction an L-alpha-D-Hep-(1-&gt;5)-[alpha-Kdo-(2-&gt;4)]-alpha-Kdo-(2-&gt;6)-lipid A + ADP-L-glycero-beta-D-manno-heptose = an L-alpha-D-Hep-(1-&gt;3)-L-alpha-D-Hep-(1-&gt;5)-[alpha-Kdo-(2-&gt;4)]-alpha-Kdo-(2-&gt;6)-lipid A + ADP + H(+). It participates in bacterial outer membrane biogenesis; LOS core biosynthesis. Its function is as follows. Glycosyltransferase involved in the biosynthesis of the core oligosaccharide region of lipooligosaccharide (LOS). Catalyzes the addition of a heptose unit to the heptosyl-Kdo2-lipid A module. This is Lipooligosaccharide heptosyltransferase 2 (waaF) from Haemophilus influenzae (strain ATCC 51907 / DSM 11121 / KW20 / Rd).